The following is a 270-amino-acid chain: Orotidine 5'-phosphate decarboxylase (270 aa).

The Proton donor role is filled by Lys-95.

The protein belongs to the OMP decarboxylase family. Type 2 subfamily.

The catalysed reaction is orotidine 5'-phosphate + H(+) = UMP + CO2. It functions in the pathway pyrimidine metabolism; UMP biosynthesis via de novo pathway; UMP from orotate: step 2/2. In Azoarcus sp. (strain BH72), this protein is Orotidine 5'-phosphate decarboxylase.